The following is a 702-amino-acid chain: Polyphosphate kinase (702 aa).

Residue Asn-55 participates in ATP binding. Mg(2+) is bound by residues Arg-389 and Arg-419. His-449 acts as the Phosphohistidine intermediate in catalysis. Residues Tyr-482, Arg-578, and His-606 each coordinate ATP.

The protein belongs to the polyphosphate kinase 1 (PPK1) family. Mg(2+) is required as a cofactor. In terms of processing, an intermediate of this reaction is the autophosphorylated ppk in which a phosphate is covalently linked to a histidine residue through a N-P bond.

It catalyses the reaction [phosphate](n) + ATP = [phosphate](n+1) + ADP. Functionally, catalyzes the reversible transfer of the terminal phosphate of ATP to form a long-chain polyphosphate (polyP). The protein is Polyphosphate kinase of Bacillus cereus (strain ATCC 14579 / DSM 31 / CCUG 7414 / JCM 2152 / NBRC 15305 / NCIMB 9373 / NCTC 2599 / NRRL B-3711).